A 136-amino-acid polypeptide reads, in one-letter code: Large ribosomal subunit protein bL17 (136 aa).

This sequence belongs to the bacterial ribosomal protein bL17 family. Part of the 50S ribosomal subunit. Contacts protein L32.

This chain is Large ribosomal subunit protein bL17, found in Rickettsia conorii (strain ATCC VR-613 / Malish 7).